The chain runs to 267 residues: 3-isopropylmalate dehydratase large subunit (267 aa).

[4Fe-4S] cluster contacts are provided by cysteine 146, cysteine 206, and cysteine 209.

It belongs to the aconitase/IPM isomerase family. LeuC type 1 subfamily. Heterodimer of LeuC and LeuD. The cofactor is [4Fe-4S] cluster.

It catalyses the reaction (2R,3S)-3-isopropylmalate = (2S)-2-isopropylmalate. It participates in amino-acid biosynthesis; L-leucine biosynthesis; L-leucine from 3-methyl-2-oxobutanoate: step 2/4. Catalyzes the isomerization between 2-isopropylmalate and 3-isopropylmalate, via the formation of 2-isopropylmaleate. This is 3-isopropylmalate dehydratase large subunit (leuC) from Cupriavidus necator (Alcaligenes eutrophus).